Here is an 87-residue protein sequence, read N- to C-terminus: RNA-binding protein Hfq (87 aa).

In terms of domain architecture, Sm spans 9–68; it reads DPFLNALRRERIPVSIFLVNGIKLQGKIQSFDQFVILLENTVNQMVYKHAISTVVPARAV.

Belongs to the Hfq family. In terms of assembly, homohexamer.

Functionally, RNA chaperone that binds small regulatory RNA (sRNAs) and mRNAs to facilitate mRNA translational regulation in response to envelope stress, environmental stress and changes in metabolite concentrations. Also binds with high specificity to tRNAs. The protein is RNA-binding protein Hfq of Pseudoalteromonas translucida (strain TAC 125).